A 557-amino-acid polypeptide reads, in one-letter code: MSQYAPFVKPYIEYNEFGWGPSDLPDLEVPYQPFCKGDRLGKISDWTTPVQERKYNNNKYMSTFGSSNSQYAYFHGNDDASFHLVNGNNMRALKPYQRNRYRPTQRNNLRLHGRNGRFNAAIGAGHGGAGAAGGAGASNKYGKGRDMRRGQTGRRFMRAAPVRQRQSSVVVRSDWVSIEEIDFPRLLKLTLPNIQEGADLITCGTLEFFDKQCDRINVKNERPLQKIDRIINVPGTIDDPIIRRLSKSLGNVFATDDIIATLMCCTRSNYSWDIVIDKVGTKLFLDKRDNAQFDMLTVNETALEPPLEEEGSINSPQSLSLEATIINHNFSQQVLKIGELEPKHKFDEPNPFEEPGVELASIGYRYKQWQLGDDMVLVARCKHNGVLRSPGGELQFLSIRALNEWDSKAANSVEWRQKLDSQRGAVLASELRNNACKLAKWTVEAVLAGSDQLKLGYVSRLNRKDHLHHVILGMQQFKPQEFATQINLNMDNAWGVLRCLVDIMLKQPDGKYLIMKDPNKPMIRLYDIPENAFDSDNNDGEETSDDRPFLNSKDNKL.

The RNA gate stretch occupies residues 292 to 306 (QFDMLTVNETALEPP). Residues 533-557 (FDSDNNDGEETSDDRPFLNSKDNKL) form a disordered region. Basic and acidic residues predominate over residues 545–557 (DDRPFLNSKDNKL).

It belongs to the eIF-3 subunit D family. As to quaternary structure, component of the eukaryotic translation initiation factor 3 (eIF-3) complex. The eIF-3 complex interacts with pix.

The protein resides in the cytoplasm. MRNA cap-binding component of the eukaryotic translation initiation factor 3 (eIF-3) complex, which is involved in protein synthesis of a specialized repertoire of mRNAs and, together with other initiation factors, stimulates binding of mRNA and methionyl-tRNAi to the 40S ribosome. The eIF-3 complex specifically targets and initiates translation of a subset of mRNAs involved in cell proliferation. In the eIF-3 complex, eif3d specifically recognizes and binds the 7-methylguanosine cap of a subset of mRNAs. The polypeptide is Eukaryotic translation initiation factor 3 subunit D-2 (Drosophila grimshawi (Hawaiian fruit fly)).